Consider the following 1075-residue polypeptide: Paired amphipathic helix protein pst2 (1075 aa).

3 PAH domains span residues 28 to 102, 138 to 208, and 243 to 319; these read SPNG…LPSS, LPCT…LPSS, and RPDN…TSLS. Ser641 and Ser643 each carry phosphoserine. The interval 647 to 700 is disordered; it reads LTEFVKQPKINGQRESRSAAAARKKEESGNKSQSNSQNSLSDESGNVTPVSKKQ. Residues 658–675 show a composition bias toward basic and acidic residues; that stretch reads GQRESRSAAAARKKEESG. Low complexity predominate over residues 676–691; it reads NKSQSNSQNSLSDESG.

As to quaternary structure, heterotetramer of alp13, clr6, prw1 and pst2.

It is found in the nucleus. Has a role in chromatin assembly and chromosome segregation. Involved in the deacetylation of histones. This chain is Paired amphipathic helix protein pst2 (pst2), found in Schizosaccharomyces pombe (strain 972 / ATCC 24843) (Fission yeast).